The chain runs to 62 residues: Sperm protamine P1 (62 aa).

The disordered stretch occupies residues 1-62 (MARYRRRSRS…RYSRRGRRRY (62 aa)).

Belongs to the protamine P1 family. As to expression, testis.

The protein resides in the nucleus. Its subcellular location is the chromosome. Its function is as follows. Protamines substitute for histones in the chromatin of sperm during the haploid phase of spermatogenesis. They compact sperm DNA into a highly condensed, stable and inactive complex. This chain is Sperm protamine P1 (PRM1), found in Sarcophilus harrisii (Tasmanian devil).